We begin with the raw amino-acid sequence, 454 residues long: uncharacterized protein (454 aa).

Residues C73, C79, C82, and C154 each contribute to the [4Fe-4S] cluster site. The S-adenosyl-L-methionine site is built by Q279, F307, D328, and D381. The Nucleophile role is filled by C408.

It belongs to the class I-like SAM-binding methyltransferase superfamily. RNA M5U methyltransferase family.

This is an uncharacterized protein from Leptospira interrogans serogroup Icterohaemorrhagiae serovar copenhageni (strain Fiocruz L1-130).